The chain runs to 239 residues: Glycerol-3-phosphate acyltransferase (239 aa).

Transmembrane regions (helical) follow at residues 6-26, 61-81, 99-119, 135-155, 159-179, and 199-219; these read AIALLIVFSLVIGYLMGSVMF, FLVGLCDALKGFLAFVFSFLI, YYLTYLSCFAATIGHIFPLYF, LAISLWWFVICLVLWLLVTLI, VSLASLVTFFILAIIILVPWL, and WYIILFFVLWYWPLTIAVFWL.

The protein belongs to the PlsY family. Probably interacts with PlsX.

It localises to the cell membrane. The catalysed reaction is an acyl phosphate + sn-glycerol 3-phosphate = a 1-acyl-sn-glycero-3-phosphate + phosphate. Its pathway is lipid metabolism; phospholipid metabolism. Its function is as follows. Catalyzes the transfer of an acyl group from acyl-phosphate (acyl-PO(4)) to glycerol-3-phosphate (G3P) to form lysophosphatidic acid (LPA). This enzyme utilizes acyl-phosphate as fatty acyl donor, but not acyl-CoA or acyl-ACP. This is Glycerol-3-phosphate acyltransferase from Mycoplasma pneumoniae (strain ATCC 29342 / M129 / Subtype 1) (Mycoplasmoides pneumoniae).